A 344-amino-acid chain; its full sequence is S-adenosylmethionine:tRNA ribosyltransferase-isomerase (344 aa).

It belongs to the QueA family. In terms of assembly, monomer.

The protein localises to the cytoplasm. The enzyme catalyses 7-aminomethyl-7-carbaguanosine(34) in tRNA + S-adenosyl-L-methionine = epoxyqueuosine(34) in tRNA + adenine + L-methionine + 2 H(+). Its pathway is tRNA modification; tRNA-queuosine biosynthesis. In terms of biological role, transfers and isomerizes the ribose moiety from AdoMet to the 7-aminomethyl group of 7-deazaguanine (preQ1-tRNA) to give epoxyqueuosine (oQ-tRNA). The sequence is that of S-adenosylmethionine:tRNA ribosyltransferase-isomerase from Levilactobacillus brevis (strain ATCC 367 / BCRC 12310 / CIP 105137 / JCM 1170 / LMG 11437 / NCIMB 947 / NCTC 947) (Lactobacillus brevis).